Reading from the N-terminus, the 450-residue chain is Coiled-coil domain-containing protein 149-A (450 aa).

Coiled coils occupy residues M1–K197 and I259–S286. Positions S290–E358 are disordered. Positions P343–T354 are enriched in polar residues.

Belongs to the CCDC149 family.

This chain is Coiled-coil domain-containing protein 149-A (ccdc149a), found in Danio rerio (Zebrafish).